The primary structure comprises 976 residues: Vacuolar membrane protease (976 aa).

The Cytoplasmic portion of the chain corresponds to 1-15 (MKLKSVFRSVLKYRK). A helical membrane pass occupies residues 16–36 (TNLSLLLLITYSIITLLYIFD). Over 37–359 (HERYKLNLPK…KFFVISAKTL (323 aa)) the chain is Vacuolar. N-linked (GlcNAc...) asparagine glycosylation is found at asparagine 96 and asparagine 121. Histidine 156 and aspartate 168 together coordinate Zn(2+). A glycan (N-linked (GlcNAc...) asparagine) is linked at asparagine 189. Glutamate 200 functions as the Proton acceptor in the catalytic mechanism. Glutamate 201 contacts Zn(2+). N-linked (GlcNAc...) asparagine glycosylation is found at asparagine 212 and asparagine 217. Glutamate 226 and histidine 300 together coordinate Zn(2+). The chain crosses the membrane as a helical span at residues 360-380 (FYWNCIFLLVSPVVAIGLYLI). Topologically, residues 381–392 (SRDRMTWKSHSW) are cytoplasmic. The chain crosses the membrane as a helical span at residues 393–412 (LSWTRFPLSLAAGIIVQKLF). Residues 413 to 428 (SNDIIRSNPLTFSRNY) are Vacuolar-facing. The helical transmembrane segment at 429 to 449 (FWPISAFFTQVIFTSYVLINC) threads the bilayer. At 450–461 (SNFFFPCADMKS) the chain is on the cytoplasmic side. Residues 462-482 (LSIIELFIILWTILLFTSKLL) traverse the membrane as a helical segment. Over 483 to 496 (YSSDYRYTGLYPLS) the chain is Vacuolar. The chain crosses the membrane as a helical span at residues 497-517 (IFFLLSTIAAILRLLALALGM). Topologically, residues 518–627 (RTRKRLGREC…NSLKLEYTDY (110 aa)) are cytoplasmic. Residues 528-610 (RDHHSNYSSH…PLLKGSNSME (83 aa)) are disordered. The span at 549 to 558 (NLEQPQDQFT) shows a compositional bias: polar residues. Positions 559–570 (SSQDDQASIQDD) are enriched in low complexity. The segment covering 582–601 (NVDEDHGMDSSSQQHDERVP) has biased composition (basic and acidic residues). The chain crosses the membrane as a helical span at residues 628–648 (AWIIQFLLIVPIPSFILFNSV). Residues 649 to 668 (DVIMDALNHTVQEGSKATFD) are Vacuolar-facing. Residue asparagine 656 is glycosylated (N-linked (GlcNAc...) asparagine). A helical transmembrane segment spans residues 669-689 (VLRFGMVGSILMALPILPFFY). Residues 690–692 (KVN) are Cytoplasmic-facing. A helical transmembrane segment spans residues 693 to 713 (YITISLTALLFLISASKTLLV). The Vacuolar portion of the chain corresponds to 714–976 (HPFTNSNPLK…LVIVKDAIIL (263 aa)). 5 N-linked (GlcNAc...) asparagine glycosylation sites follow: asparagine 768, asparagine 796, asparagine 811, asparagine 866, and asparagine 937.

It belongs to the peptidase M28 family. Requires Zn(2+) as cofactor.

It localises to the vacuole membrane. May be involved in vacuolar sorting and osmoregulation. This chain is Vacuolar membrane protease, found in Saccharomyces cerevisiae (strain Lalvin EC1118 / Prise de mousse) (Baker's yeast).